Consider the following 405-residue polypeptide: Cystathionine gamma-lyase (405 aa).

3 residues coordinate substrate: Arg-62, Tyr-114, and Arg-119. N6-(pyridoxal phosphate)lysine is present on Lys-212. Substrate is bound at residue Glu-339.

It belongs to the trans-sulfuration enzymes family. In terms of assembly, homotetramer. Interacts with CALM in a calcium-dependent manner. Requires pyridoxal 5'-phosphate as cofactor.

Its subcellular location is the cytoplasm. The catalysed reaction is L,L-cystathionine + H2O = 2-oxobutanoate + L-cysteine + NH4(+). It carries out the reaction L-cysteine + H2O = hydrogen sulfide + pyruvate + NH4(+) + H(+). It catalyses the reaction L-homocysteine + H2O = 2-oxobutanoate + hydrogen sulfide + NH4(+) + H(+). The enzyme catalyses L-homoserine = 2-oxobutanoate + NH4(+). The catalysed reaction is L-selenocystathionine + H2O = L-selenocysteine + 2-oxobutanoate + NH4(+). It participates in amino-acid biosynthesis; L-cysteine biosynthesis; L-cysteine from L-homocysteine and L-serine: step 2/2. Its function is as follows. Catalyzes the last step in the trans-sulfuration pathway from L-methionine to L-cysteine in a pyridoxal-5'-phosphate (PLP)-dependent manner, which consists on cleaving the L,L-cystathionine molecule into L-cysteine, ammonia and 2-oxobutanoate. Part of the L-cysteine derived from the trans-sulfuration pathway is utilized for biosynthesis of the ubiquitous antioxidant glutathione. Besides its role in the conversion of L-cystathionine into L-cysteine, it utilizes L-cysteine and L-homocysteine as substrates (at much lower rates than L,L-cystathionine) to produce hydrogen sulfide (H2S). In vitro, it converts two L-cysteine molecules into lanthionine and H2S, and two L-homocysteine molecules to homolanthionine and H2S, which can be particularly relevant under conditions of severe hyperhomocysteinemia. Lanthionine and homolanthionine are structural homologs of L,L-cystathionine that differ by the absence or presence of an extra methylene group, respectively. Acts as a cysteine-protein sulfhydrase by mediating sulfhydration of target proteins: sulfhydration consists of converting -SH groups into -SSH on specific cysteine residues of target proteins such as GAPDH, PTPN1 and NF-kappa-B subunit RELA, thereby regulating their function. By generating the gasotransmitter H2S, it participates in a number of physiological processes such as vasodilation, bone protection, and inflammation. Plays an essential role in myogenesis by contributing to the biogenesis of H2S in skeletal muscle tissue. Can also accept homoserine as substrate. Catalyzes the elimination of selenocystathionine (which can be derived from the diet) to yield selenocysteine, ammonia and 2-oxobutanoate. This is Cystathionine gamma-lyase (CTH) from Sus scrofa (Pig).